We begin with the raw amino-acid sequence, 506 residues long: MXECKGYLELXRSXXHDFIYPLIFQEYIYALAHDRGLNRSIFFENAXYDNKSSLLIVKRLITHLIXQMYXQNHFLFYTNNFXPDPFGGYXTGVXSXMIFEGFGVVVEIPFYLRLLSFLEGKERVKSHNLRSLHSIFPFLEXXXXXXXXXXXXXXXXXXXXXXXXXXXXXXXXXXXXXXXIRFFLHEYPNRNSLITPKKYSFSFSKRNKKFFLFLYNFHVYEYESIFVFLRNQSSHLCSISFETFLERILFYKKIELEVFAKHFKAILWVFKDPFLHYVRYRGKFILASKGSSLLMNKWEYYLVNFWKCYFYIWAQPRRIHIKQLSKNSLDFLGYLSNVRLKPSMVRSQMIENSFLIENAGKKLDTLVPITSMIGSLSKAKFCNVLGHPMNKPVWGGLSDSXIMERIRAXIXKSSHYYSXSLKKISLYXIKYILRLPGAKTLARKHKITVRSFLKRLGVGLLEEFFTEEEQVFYLTFPKASSTSRKLYQRRVWYLDIFYINDTPNHE.

Belongs to the intron maturase 2 family. MatK subfamily.

Its subcellular location is the plastid. The protein resides in the chloroplast. Functionally, usually encoded in the trnK tRNA gene intron. Probably assists in splicing its own and other chloroplast group II introns. This is Maturase K from Andromeda polifolia (Bog rosemary).